The primary structure comprises 481 residues: MNSFLMHWTYAIPEIWVLTMACVVLLADLFWGDGLRDLAAVLTVLTLSGAAVLTVFEMGQSGTAFAGLFVLDRFTNVAELFSYLAVLMVVLYSRRYLVDRGIYRGEVFVLLLFALLGIMVMVSGGSLLSVYLGLELLALSQYALVAFYRDSVMATEAGLKYFVLGALASGLLLYGMSLLYGLTGTLDVRDIAADLVNMTAGNLVLVFAIVFIAAGIAFKLGAAPFHMWLPDVYQGAPTVVTAFLASAPKIGAFALIIRLLVDGGYGMQESWQQIFVALTVVSLVVGNVIAIAQQNIKRMLAYSTIGHVGFMLLGIVAGTEAGLASAFFYTVVYTLMSLAGFGMILLVSRAGFEAERIDDFKGLAQRKPWYAFLMMIVMFSMAGVPPTVGFYAKLAVFQAVVAAGYVWLAVVGVLLAVIGAFYYLRVVKVMYFDKPAPDAGLIVRDDLASMALSINSLALLVLGILPGPLMAFCFYAMRGVI.

The next 14 membrane-spanning stretches (helical) occupy residues 11–31 (AIPE…DLFW), 38–58 (LAAV…VFEM), 69–89 (FVLD…VLMV), 107–127 (VFVL…GGSL), 128–148 (LSVY…VAFY), 162–182 (FVLG…LYGL), 203–223 (LVLV…LGAA), 237–257 (PTVV…ALII), 271–291 (WQQI…VIAI), 299–319 (MLAY…VAGT), 327–347 (FFYT…ILLV), 370–390 (YAFL…TVGF), 401–421 (VAAG…IGAF), and 457–477 (LALL…FYAM).

Belongs to the complex I subunit 2 family. In terms of assembly, NDH-1 is composed of 14 different subunits. Subunits NuoA, H, J, K, L, M, N constitute the membrane sector of the complex.

The protein resides in the cell inner membrane. It carries out the reaction a quinone + NADH + 5 H(+)(in) = a quinol + NAD(+) + 4 H(+)(out). Its function is as follows. NDH-1 shuttles electrons from NADH, via FMN and iron-sulfur (Fe-S) centers, to quinones in the respiratory chain. The immediate electron acceptor for the enzyme in this species is believed to be ubiquinone. Couples the redox reaction to proton translocation (for every two electrons transferred, four hydrogen ions are translocated across the cytoplasmic membrane), and thus conserves the redox energy in a proton gradient. This chain is NADH-quinone oxidoreductase subunit N, found in Acidithiobacillus ferrooxidans (strain ATCC 23270 / DSM 14882 / CIP 104768 / NCIMB 8455) (Ferrobacillus ferrooxidans (strain ATCC 23270)).